The chain runs to 701 residues: Elongation factor G 1 (701 aa).

A tr-type G domain is found at 8-290 (ERYRNIGISA…AVIDYLPSPL (283 aa)). GTP contacts are provided by residues 17–24 (AHIDAGKT), 88–92 (DTPGH), and 142–145 (NKMD).

This sequence belongs to the TRAFAC class translation factor GTPase superfamily. Classic translation factor GTPase family. EF-G/EF-2 subfamily.

Its subcellular location is the cytoplasm. In terms of biological role, catalyzes the GTP-dependent ribosomal translocation step during translation elongation. During this step, the ribosome changes from the pre-translocational (PRE) to the post-translocational (POST) state as the newly formed A-site-bound peptidyl-tRNA and P-site-bound deacylated tRNA move to the P and E sites, respectively. Catalyzes the coordinated movement of the two tRNA molecules, the mRNA and conformational changes in the ribosome. In Paraburkholderia xenovorans (strain LB400), this protein is Elongation factor G 1.